We begin with the raw amino-acid sequence, 616 residues long: Glutamine--fructose-6-phosphate aminotransferase [isomerizing] (616 aa).

Residue cysteine 2 is the Nucleophile; for GATase activity of the active site. The region spanning 2–222 (CGIIGYSGPR…QERIVALSGD (221 aa)) is the Glutamine amidotransferase type-2 domain. The disordered stretch occupies residues 70 to 89 (TGIGHTRWATHGEPSDRNAH). 2 consecutive SIS domains span residues 289-428 (IRDD…LRGF) and 461-606 (LAHW…VDRP). Lysine 611 (for Fru-6P isomerization activity) is an active-site residue.

As to quaternary structure, homodimer.

It is found in the cytoplasm. It catalyses the reaction D-fructose 6-phosphate + L-glutamine = D-glucosamine 6-phosphate + L-glutamate. In terms of biological role, catalyzes the first step in hexosamine metabolism, converting fructose-6P into glucosamine-6P using glutamine as a nitrogen source. In Tropheryma whipplei (strain Twist) (Whipple's bacillus), this protein is Glutamine--fructose-6-phosphate aminotransferase [isomerizing].